The primary structure comprises 299 residues: Taste receptor type 2 member 19 (299 aa).

Residue M1 is a topological domain, extracellular. A helical transmembrane segment spans residues 2–22 (MCFLLIISSILVVFAFVLGNV). The Cytoplasmic portion of the chain corresponds to 23–55 (ANGFIALVNVIDWVNTRKISSAEQILTALVVSR). Residues 56–76 (IGLLWVMLFLWYATVFNSALY) traverse the membrane as a helical segment. The Extracellular portion of the chain corresponds to 77-87 (GLEVRIVASNA). The helical transmembrane segment at 88-108 (WAVTNHFSMWLAASLSIFCLL) threads the bilayer. Over 109-127 (KIANFSNLISLHLKKRIKS) the chain is Cytoplasmic. The helical transmembrane segment at 128–148 (VVLVILLGPLVFLICNLAVIT) threads the bilayer. Over 149-181 (MDERVWTKEYEGNVTWKIKLRNAIHLSSLTVTT) the chain is Extracellular. N161 is a glycosylation site (N-linked (GlcNAc...) asparagine). The chain crosses the membrane as a helical span at residues 182 to 202 (LANLIPFTLSLICFLLLICSL). Topologically, residues 203-226 (CKHLKKMRLHSKGSQDPSTKVHIK) are cytoplasmic. The helical transmembrane segment at 227 to 247 (ALQTVTSFLMLFAIYFLCIIT) threads the bilayer. At 248 to 259 (STWNLRTQQSKL) the chain is on the extracellular side. A helical membrane pass occupies residues 260–280 (VLLLCQTVAIMYPSFHSFILI). Residues 281–299 (MGSRKLKQTFLSVLWQMTR) lie on the Cytoplasmic side of the membrane.

This sequence belongs to the G-protein coupled receptor T2R family. In terms of tissue distribution, expressed in subsets of taste receptor cells of the tongue and exclusively in gustducin-positive cells.

The protein resides in the membrane. Functionally, receptor that may play a role in the perception of bitterness and is gustducin-linked. May play a role in sensing the chemical composition of the gastrointestinal content. The activity of this receptor may stimulate alpha gustducin, mediate PLC-beta-2 activation and lead to the gating of TRPM5. This Homo sapiens (Human) protein is Taste receptor type 2 member 19 (TAS2R19).